A 543-amino-acid polypeptide reads, in one-letter code: Proline--tRNA ligase, chloroplastic/mitochondrial (543 aa).

The tract at residues 41–63 (ATAPSGTASPETKSSEVDRLRSD) is disordered. Residues 53–63 (KSSEVDRLRSD) are compositionally biased toward basic and acidic residues.

This sequence belongs to the class-II aminoacyl-tRNA synthetase family.

The protein localises to the plastid. It localises to the chloroplast. Its subcellular location is the mitochondrion. The catalysed reaction is tRNA(Pro) + L-proline + ATP = L-prolyl-tRNA(Pro) + AMP + diphosphate. Catalyzes the attachment of proline to tRNA(Pro) in a two-step reaction: proline is first activated by ATP to form Pro-AMP and then transferred to the acceptor end of tRNA(Pro). The protein is Proline--tRNA ligase, chloroplastic/mitochondrial of Arabidopsis thaliana (Mouse-ear cress).